A 319-amino-acid polypeptide reads, in one-letter code: HTH-type transcriptional regulator YidZ (319 aa).

Residues 8–65 (LDLNLLLCLQLLMQERSVTKAAKRMNVTPSAVSKSLAKLRAWFDDPLFVNTPLGLAPT) enclose the HTH lysR-type domain. Residues 25–44 (VTKAAKRMNVTPSAVSKSLA) constitute a DNA-binding region (H-T-H motif).

This sequence belongs to the LysR transcriptional regulatory family.

In terms of biological role, involved in anaerobic NO protection. In Salmonella agona (strain SL483), this protein is HTH-type transcriptional regulator YidZ.